The primary structure comprises 313 residues: Trimeric intracellular cation channel type 1B.2 (313 aa).

The Lumenal segment spans residues Met1–Tyr28. Residues Pro29–Gly48 form a helical membrane-spanning segment. Over Pro49–Lys57 the chain is Cytoplasmic. The discontinuously helical transmembrane segment at His58 to Gly82 threads the bilayer. Topologically, residues Glu83–Lys90 are lumenal. A helical membrane pass occupies residues Gln91 to Ser108. The Cytoplasmic portion of the chain corresponds to Pro109–Thr118. The helical transmembrane segment at Trp119 to Tyr149 threads the bilayer. Residues Lys130 and Arg134 each contribute to the a 1,2-diacyl-sn-glycero-3-phospho-(1D-myo-inositol-4,5-bisphosphate) site. Residues Pro150–Glu151 are Lumenal-facing. Residues Ser152–Arg178 traverse the membrane as a discontinuously helical segment. Position 168 (Gly168) interacts with a 1,2-diacyl-sn-glycero-3-phospho-(1D-myo-inositol-4,5-bisphosphate). Residues Gly179–Ser192 lie on the Cytoplasmic side of the membrane. A helical membrane pass occupies residues Phe193–His210. Residues Ser211–Ala216 are Lumenal-facing. A helical membrane pass occupies residues Pro217–Leu239. At Ser240–Asn313 the chain is on the cytoplasmic side.

This sequence belongs to the TMEM38 family. In terms of assembly, homotrimer; trimerization probably requires binding to phosphatidylinositol 4,5-bisphosphate (PIP2).

The protein localises to the endoplasmic reticulum membrane. Its function is as follows. Potassium channel that mediates transmembrane potassium transport. Might be required for maintenance of rapid intracellular calcium release. May act as a potassium counter-ion channel that functions in synchronization with calcium release from intracellular stores. Binds phosphatidylinositol 4,5-bisphosphate (PIP2). The polypeptide is Trimeric intracellular cation channel type 1B.2 (Caenorhabditis elegans).